The following is a 414-amino-acid chain: Methanesulfonate monooxygenase hydroxylase subunit alpha (414 aa).

The 120-residue stretch at 44–163 (WVPFRHESEL…CEVKFGGFVW (120 aa)) folds into the Rieske domain. Positions 86, 88, 115, and 118 each coordinate [2Fe-2S] cluster. Residue His225 participates in Fe cation binding.

Belongs to the bacterial ring-hydroxylating dioxygenase alpha subunit family. As to quaternary structure, the MSA monooxygenase system consists of 4 proteins: the 2 subunits of the hydroxylase component (MsmA and MsmB), a ferredoxin (MsmC) and a ferredoxin reductase (MsmD). The hydroxylase component consists of a 3 alpha (MsmA) and 3 beta (MsmB) subunits. The cofactor is [2Fe-2S] cluster. Fe cation serves as cofactor.

It is found in the cytoplasm. The enzyme catalyses methanesulfonate + NADH + O2 = sulfite + formaldehyde + NAD(+) + H2O. With respect to regulation, MSAMO is inhibited by metal chelators (such as bathophenanthroline, bathocuprione, neocuprione, alpha-alpha-dipyridil and sodium EDTA) and by sodium azide, sodium arsenate and potassium cyanide. Its function is as follows. Methanesulfonate monooxygenase (MSAMO) mediates the primary degradation of methanesulfonic acid (MSA) to produce formaldehyd and inorganic sulfite by initial hydroxylation of the carbon atom prior to spontaneous cleavage of the unstable hydroxymethanesulfonic acid. MSAMO has a restricted substrate range that includes only the short-chain aliphatic sulfonates (methane- to butanesulfonate) and excludes all larger molecules, such as arylsulfonates and aromatic sulfonates. All MSAMO components are required for enzyme activity. This chain is Methanesulfonate monooxygenase hydroxylase subunit alpha, found in Methylosulfonomonas methylovora.